A 300-amino-acid polypeptide reads, in one-letter code: MTDLPDTDFTQRFIFDESDTRGELVALERSYAEVLAKHPYPEPVAQLLGELMAAASLLVGTLKFDGLLILQARSEGPVPLLMIECSSEREIRGLARYDAEQIAPDATLADLMPNGVLALTVDPTNGQRYQGIVDLDGTNLAECFTNYFVMSQQTGTRFWLYADGRSARGLLLQQLPADRLRDQEERDASWQHLTALASTLTADELLSLDNETVLHRLYHEEAVRLFDVQPLRFRCSCSRERSGNALVSLGLEDAQQLVVEHGGSIEIDCQFCNERYLFDAADIAQLFAGAGVDTPSDTRH.

2 cysteine pairs are disulfide-bonded: Cys235–Cys237 and Cys269–Cys272.

This sequence belongs to the HSP33 family. Under oxidizing conditions two disulfide bonds are formed involving the reactive cysteines. Under reducing conditions zinc is bound to the reactive cysteines and the protein is inactive.

The protein resides in the cytoplasm. In terms of biological role, redox regulated molecular chaperone. Protects both thermally unfolding and oxidatively damaged proteins from irreversible aggregation. Plays an important role in the bacterial defense system toward oxidative stress. The chain is 33 kDa chaperonin from Pseudomonas fluorescens (strain ATCC BAA-477 / NRRL B-23932 / Pf-5).